We begin with the raw amino-acid sequence, 195 residues long: Imidazoleglycerol-phosphate dehydratase (195 aa).

The protein belongs to the imidazoleglycerol-phosphate dehydratase family.

The protein resides in the cytoplasm. It carries out the reaction D-erythro-1-(imidazol-4-yl)glycerol 3-phosphate = 3-(imidazol-4-yl)-2-oxopropyl phosphate + H2O. It functions in the pathway amino-acid biosynthesis; L-histidine biosynthesis; L-histidine from 5-phospho-alpha-D-ribose 1-diphosphate: step 6/9. The polypeptide is Imidazoleglycerol-phosphate dehydratase (Deinococcus deserti (strain DSM 17065 / CIP 109153 / LMG 22923 / VCD115)).